The sequence spans 440 residues: FAD-dependent monooxygenase FVEG_08293 (440 aa).

The helical transmembrane segment at 7 to 26 threads the bilayer; sequence EFNVAIVGAGVAGLALAMAL. FAD is bound by residues Glu-37 and Gly-50. The N-linked (GlcNAc...) asparagine glycan is linked to Asn-77. An FAD-binding site is contributed by Arg-122. Active-site residues include Arg-203 and Tyr-235. The FAD site is built by Asp-317 and Ala-330.

Belongs to the paxM FAD-dependent monooxygenase family. FAD is required as a cofactor.

The protein localises to the membrane. In terms of biological role, FAD-dependent monooxygenase; part of the Fusarium detoxification of benzoxazolinone cluster 1 (FDB1) involved in the degradation of benzoxazolinones produced by the host plant. Maize, wheat, and rye produce the 2 benzoxazinone phytoanticipins 2,4-dihy-droxy-7-methoxy-1,4-benzoxazin-3-one (DIMBOA) and 2,4-dihydroxy-1,4-benzoxazin-3-one (DIBOA) that, due to their inherent instability once released, spontaneously degrade to the more stable corresponding benzoxazolinones, 6-methoxy-2-benzoxazolinone (MBOA) and 2-benzoxazolinone (BOA), respectively. The first step in the detoxification of benzoxazolinones involves the hydrolysis of the cyclic ester bond of benzoxazolinones by the FDB1 cluster gamma-lactamase MBL1 to aminophenols. MBL1 is able to convert BOA into 2-aminophenol (2-AP), as well as MBOA into 5-methoxy-2-aminophenol (2-AMP). The FDB2 cluster N-malonyltransferase FDB2/NAT1 then metabolizes aminophenols via N-malonylation to non-toxic malonamic acids. FDB2/NAT1 converts 2-AP into N-(2-hydroxyphenyl) malonamic acid (HPMA) and 2-AMP into N-(2-hydroxy-4-methoxyphenyl) malonamic acid (HMPMA). The duplicated dienlactone hydrolases DLH1 and DLH2 may provide redundant function for hydrolyzing the lactone moiety in the BOA molecule. The roles of the amidases an other enzymes encoded by the 2 FDB clusters have not been identified so far. In Gibberella moniliformis (strain M3125 / FGSC 7600) (Maize ear and stalk rot fungus), this protein is FAD-dependent monooxygenase FVEG_08293.